A 158-amino-acid chain; its full sequence is Endoribonuclease YbeY (158 aa).

Zn(2+)-binding residues include histidine 119, histidine 123, and aspartate 129.

This sequence belongs to the endoribonuclease YbeY family. Requires Zn(2+) as cofactor.

It localises to the cytoplasm. Its function is as follows. Single strand-specific metallo-endoribonuclease involved in late-stage 70S ribosome quality control and in maturation of the 3' terminus of the 16S rRNA. The polypeptide is Endoribonuclease YbeY (Chlamydia abortus (strain DSM 27085 / S26/3) (Chlamydophila abortus)).